The primary structure comprises 333 residues: 5-formaminoimidazole-4-carboxamide-1-(beta)-D-ribofuranosyl 5'-monophosphate synthetase (333 aa).

5-amino-1-(5-phospho-beta-D-ribosyl)imidazole-4-carboxamide-binding residues include H9 and S73. Positions 94-324 (RNLFEWEANQ…ISREIKLAIN (231 aa)) constitute an ATP-grasp domain. ATP is bound by residues 124–184 (PEDI…VPMY) and E206. N230 is a 5-amino-1-(5-phospho-beta-D-ribosyl)imidazole-4-carboxamide binding site. The Mg(2+) site is built by E269 and E282.

Belongs to the phosphohexose mutase family. Mg(2+) serves as cofactor. Mn(2+) is required as a cofactor.

It catalyses the reaction 5-amino-1-(5-phospho-beta-D-ribosyl)imidazole-4-carboxamide + formate + ATP = 5-formamido-1-(5-phospho-D-ribosyl)imidazole-4-carboxamide + ADP + phosphate. Its pathway is purine metabolism; IMP biosynthesis via de novo pathway; 5-formamido-1-(5-phospho-D-ribosyl)imidazole-4-carboxamide from 5-amino-1-(5-phospho-D-ribosyl)imidazole-4-carboxamide (formate route): step 1/1. Functionally, catalyzes the ATP- and formate-dependent formylation of 5-aminoimidazole-4-carboxamide-1-beta-d-ribofuranosyl 5'-monophosphate (AICAR) to 5-formaminoimidazole-4-carboxamide-1-beta-d-ribofuranosyl 5'-monophosphate (FAICAR) in the absence of folates. In Sulfurisphaera tokodaii (strain DSM 16993 / JCM 10545 / NBRC 100140 / 7) (Sulfolobus tokodaii), this protein is 5-formaminoimidazole-4-carboxamide-1-(beta)-D-ribofuranosyl 5'-monophosphate synthetase.